A 1020-amino-acid chain; its full sequence is Carbamoyl phosphate synthase arginine-specific large chain (1020 aa).

Residues 1 to 401 (MPKNNAIHSI…ATLKAIASLE (401 aa)) are carboxyphosphate synthetic domain. Residues R129, R169, G175, G176, Q208, I210, E215, G241, I242, H243, Q284, and E298 each coordinate ATP. The ATP-grasp 1 domain occupies 133-327 (KTLMKRLHQP…IAKIAADIAI (195 aa)). Mg(2+) is bound by residues Q284, E298, and N300. Mn(2+) is bound by residues Q284, E298, and N300. Oligomerization domain regions lie at residues 402-542 (IDPK…FGQT) and 402-544 (IDPK…QTNE). 2 carbamoyl phosphate synthetic domain regions span residues 543–927 (NESH…ADSY) and 544–927 (ESHP…ADSY). The ATP-grasp 2 domain maps to 669-858 (ADCLRLLKIA…LAQLATRLIL (190 aa)). The ATP site is built by R705, Q744, L746, E750, G775, V776, H777, S778, and Q818. The Mg(2+) site is built by Q818 and N831. Residues Q818 and N831 each coordinate Mn(2+). An MGS-like domain is found at 927-1020 (YHLETWQTVD…LAVTPTPATI (94 aa)). The allosteric domain stretch occupies residues 928-1020 (HLETWQTVDG…LAVTPTPATI (93 aa)).

This sequence belongs to the CarB family. In terms of assembly, composed of two chains; the small (or glutamine) chain promotes the hydrolysis of glutamine to ammonia, which is used by the large (or ammonia) chain to synthesize carbamoyl phosphate. Tetramer of heterodimers (alpha,beta)4. The cofactor is Mg(2+). Mn(2+) is required as a cofactor.

It catalyses the reaction hydrogencarbonate + L-glutamine + 2 ATP + H2O = carbamoyl phosphate + L-glutamate + 2 ADP + phosphate + 2 H(+). The catalysed reaction is hydrogencarbonate + NH4(+) + 2 ATP = carbamoyl phosphate + 2 ADP + phosphate + 2 H(+). The protein operates within amino-acid biosynthesis; L-arginine biosynthesis; carbamoyl phosphate from bicarbonate: step 1/1. In terms of biological role, large subunit of the glutamine-dependent carbamoyl phosphate synthetase (CPSase). CPSase catalyzes the formation of carbamoyl phosphate from the ammonia moiety of glutamine, carbonate, and phosphate donated by ATP, constituting the first step of the biosynthetic pathway leading to arginine and/or urea. The large subunit (synthetase) binds the substrates ammonia (free or transferred from glutamine from the small subunit), hydrogencarbonate and ATP and carries out an ATP-coupled ligase reaction, activating hydrogencarbonate by forming carboxy phosphate which reacts with ammonia to form carbamoyl phosphate. The sequence is that of Carbamoyl phosphate synthase arginine-specific large chain from Lactiplantibacillus plantarum (strain ATCC BAA-793 / NCIMB 8826 / WCFS1) (Lactobacillus plantarum).